A 534-amino-acid polypeptide reads, in one-letter code: NAD(P)H-quinone oxidoreductase chain 4 2 (534 aa).

A run of 13 helical transmembrane segments spans residues 6–26, 38–58, 93–113, 117–137, 138–158, 171–191, 210–230, 245–265, 279–299, 313–333, 335–355, 377–399, and 419–439; these read FPWL…IPLL, WYSL…FWTS, LILL…PVTF, FFYF…AVQD, LLVF…LLAI, FILY…AMAF, IGFQ…KLPI, TAPV…YALF, FAPI…LTSF, ISHM…GLSG, MLQM…VGAT, MFAM…GFVA, and VVVI…LLSM.

Belongs to the complex I subunit 4 family.

The protein localises to the cellular thylakoid membrane. It catalyses the reaction a plastoquinone + NADH + (n+1) H(+)(in) = a plastoquinol + NAD(+) + n H(+)(out). The catalysed reaction is a plastoquinone + NADPH + (n+1) H(+)(in) = a plastoquinol + NADP(+) + n H(+)(out). Its function is as follows. NDH-1 shuttles electrons from NAD(P)H, via FMN and iron-sulfur (Fe-S) centers, to quinones in the respiratory chain. The immediate electron acceptor for the enzyme in this species is believed to be plastoquinone. Couples the redox reaction to proton translocation (for every two electrons transferred, four hydrogen ions are translocated across the cytoplasmic membrane), and thus conserves the redox energy in a proton gradient. The chain is NAD(P)H-quinone oxidoreductase chain 4 2 from Synechococcus elongatus (strain ATCC 33912 / PCC 7942 / FACHB-805) (Anacystis nidulans R2).